Reading from the N-terminus, the 133-residue chain is Exonuclease VapC9 (133 aa).

A PINc domain is found at 5 to 113 (YLVDASALYA…LVLVTQDREL (109 aa)). Mg(2+) contacts are provided by aspartate 8, aspartate 92, and aspartate 110.

This sequence belongs to the PINc/VapC protein family. As to quaternary structure, homodimer, 2 of which then form a homotetramer. It depends on Mg(2+) as a cofactor.

Inhibited by EDTA. Toxic component of a type II toxin-antitoxin (TA) system. Its function is as follows. Has ribonuclease activity. Has a slow ssDNA exonuclease activity. In Pyrobaculum aerophilum (strain ATCC 51768 / DSM 7523 / JCM 9630 / CIP 104966 / NBRC 100827 / IM2), this protein is Exonuclease VapC9.